The chain runs to 151 residues: FAD synthase (151 aa).

ATP-binding positions include 21–22 (TF), 26–29 (HPGH), and aspartate 104.

Belongs to the archaeal FAD synthase family. As to quaternary structure, homodimer. A divalent metal cation serves as cofactor.

The enzyme catalyses FMN + ATP + H(+) = FAD + diphosphate. The protein operates within cofactor biosynthesis; FAD biosynthesis; FAD from FMN: step 1/1. Catalyzes the transfer of the AMP portion of ATP to flavin mononucleotide (FMN) to produce flavin adenine dinucleotide (FAD) coenzyme. This is FAD synthase from Methanosarcina acetivorans (strain ATCC 35395 / DSM 2834 / JCM 12185 / C2A).